The sequence spans 302 residues: Spermidine synthase (302 aa).

The residue at position 1 (Met1) is an N-acetylmethionine. In terms of domain architecture, PABS spans 18–253 (EGWFRETCSL…GQIGFMLCSK (236 aa)). Gln49 lines the S-adenosyl 3-(methylsulfanyl)propylamine pocket. Putrescine is bound at residue Tyr79. S-adenosyl 3-(methylsulfanyl)propylamine-binding positions include Gln80, Asp104, Glu124, 155 to 156 (DG), and Asp173. Residue Asp173 is the Proton acceptor of the active site. Putrescine-binding positions include 173-176 (DSSD) and Tyr241.

This sequence belongs to the spermidine/spermine synthase family. As to quaternary structure, homodimer or homotetramer.

It catalyses the reaction S-adenosyl 3-(methylsulfanyl)propylamine + putrescine = S-methyl-5'-thioadenosine + spermidine + H(+). The protein operates within amine and polyamine biosynthesis; spermidine biosynthesis; spermidine from putrescine: step 1/1. With respect to regulation, the activity is thought to be regulated mainly by the availability of decarboxylated S-adenosylmethionine. Catalyzes the production of spermidine from putrescine and decarboxylated S-adenosylmethionine (dcSAM). Has a strong preference for putrescine as substrate, and has very low activity towards 1,3-diaminopropane. Has extremely low activity towards spermidine. This Homo sapiens (Human) protein is Spermidine synthase (SRM).